The primary structure comprises 524 residues: Bifunctional purine biosynthesis protein PurH (524 aa).

The region spanning 1–154 (MTRLALLSTS…KNHAHVTVLC (154 aa)) is the MGS-like domain.

The protein belongs to the PurH family.

It carries out the reaction (6R)-10-formyltetrahydrofolate + 5-amino-1-(5-phospho-beta-D-ribosyl)imidazole-4-carboxamide = 5-formamido-1-(5-phospho-D-ribosyl)imidazole-4-carboxamide + (6S)-5,6,7,8-tetrahydrofolate. The catalysed reaction is IMP + H2O = 5-formamido-1-(5-phospho-D-ribosyl)imidazole-4-carboxamide. The protein operates within purine metabolism; IMP biosynthesis via de novo pathway; 5-formamido-1-(5-phospho-D-ribosyl)imidazole-4-carboxamide from 5-amino-1-(5-phospho-D-ribosyl)imidazole-4-carboxamide (10-formyl THF route): step 1/1. It functions in the pathway purine metabolism; IMP biosynthesis via de novo pathway; IMP from 5-formamido-1-(5-phospho-D-ribosyl)imidazole-4-carboxamide: step 1/1. The protein is Bifunctional purine biosynthesis protein PurH of Acaryochloris marina (strain MBIC 11017).